Reading from the N-terminus, the 280-residue chain is Putative S-adenosyl-L-methionine-dependent methyltransferase FRAAL3836 (280 aa).

S-adenosyl-L-methionine is bound by residues Asp-121 and 150–151 (DL).

It belongs to the UPF0677 family.

Functionally, exhibits S-adenosyl-L-methionine-dependent methyltransferase activity. The sequence is that of Putative S-adenosyl-L-methionine-dependent methyltransferase FRAAL3836 from Frankia alni (strain DSM 45986 / CECT 9034 / ACN14a).